A 667-amino-acid polypeptide reads, in one-letter code: Mediator of RNA polymerase II transcription subunit 17 (667 aa).

The stretch at 172-197 (KRRALQEAVQVLDMAQKQRQRASSNL) forms a coiled coil.

The protein belongs to the Mediator complex subunit 17 family. In terms of assembly, component of the Mediator complex.

It is found in the nucleus. In terms of biological role, component of the Mediator complex, a coactivator involved in regulated gene transcription of nearly all RNA polymerase II-dependent genes. Mediator functions as a bridge to convey information from gene-specific regulatory proteins to the basal RNA polymerase II transcription machinery. Mediator is recruited to promoters by direct interactions with regulatory proteins and serves as a scaffold for the assembly of a functional preinitiation complex with RNA polymerase II and the general transcription factors. This Caenorhabditis elegans protein is Mediator of RNA polymerase II transcription subunit 17 (mdt-17).